Reading from the N-terminus, the 321-residue chain is PI-PLC X domain-containing protein 3 (321 aa).

The region spanning 22-197 is the PI-PLC X-box domain; that stretch reads SIHSIPLTNL…DYQVLVFYHS (176 aa). Active-site residues include His-37 and His-114.

Widely expressed, with highest levels in brain, followed by heart atrium. Not detected in small intestine, nor stomach.

Its subcellular location is the cytoplasm. The polypeptide is PI-PLC X domain-containing protein 3 (Plcxd3) (Mus musculus (Mouse)).